Reading from the N-terminus, the 468-residue chain is Homocitrate synthase (468 aa).

Residues 11–266 (VGILDSTLRE…IEVVDLKKLS (256 aa)) form the Pyruvate carboxyltransferase domain. Residue Arg19 coordinates 2-oxoglutarate. Residue Glu20 participates in Mg(2+) binding. The 2-oxoglutarate site is built by His83, Arg143, and Thr177. The Mg(2+) site is built by His205 and His207. The active-site Proton acceptor is His299.

Belongs to the alpha-IPM synthase/homocitrate synthase family. Homocitrate synthase LYS20/LYS21 subfamily. Mg(2+) is required as a cofactor. Mn(2+) serves as cofactor.

The enzyme catalyses acetyl-CoA + 2-oxoglutarate + H2O = (2R)-homocitrate + CoA + H(+). The protein operates within amino-acid biosynthesis; L-lysine biosynthesis via AAA pathway; L-alpha-aminoadipate from 2-oxoglutarate: step 1/5. Its activity is regulated as follows. Inhibited by lysine. In terms of biological role, catalyzes the aldol-type condensation of 2-oxoglutarate with acetyl-CoA to yield homocitrate. Carries out the first step of the alpha-aminoadipate (AAA) lysine biosynthesis pathway. Does not display 2-isopropylmalate synthase and citramalate synthase activities since it cannot use 2-oxoisovalerate or pyruvate as substrate. In Sulfolobus acidocaldarius (strain ATCC 33909 / DSM 639 / JCM 8929 / NBRC 15157 / NCIMB 11770), this protein is Homocitrate synthase.